The chain runs to 1453 residues: Leucine-rich repeat-containing protein 9 (1453 aa).

LRR repeat units lie at residues 53-78 (FPNLTSLTIVAQDIKEISGLEPCLQL), 97-119 (CRNLEKLYLYFNKISKIENLEKL), 120-141 (IKLKVLWLNHNTIKNIEGLQTL), 142-164 (KNLKDLNLAGNLINSIGRCLDSN), 166-188 (QLERLNLSGNQICSFKELTNLTR), 224-248 (LQRFDTLDVSAKQIKELADTTAMKK), and 264-287 (KEDLEKLNDQKCKLQKLPEERVKL). The interval 302-321 (LKGSGKGHSDGSNNSKVTDP) is disordered. 23 LRR repeats span residues 344–367 (LNALNERVTFWNKKLDEIEAIYHI), 671–693 (KARPKLISLDDKTILSLAKTSVY), 694–715 (SHIVSLNLHGNSLSKLRDLSKL), 716–737 (TGLRKLNISFNEFTCLDDVYHL), 739–758 (NLEYLDASHNHVITLEGFRG), 759–784 (LMKLKHLDLSWNQLKKSGNEINMLCK), 786–812 (TTSLLTLDIQHNPWQKPATLRLSVIGR), 886–908 (YLKITALNLDGQHLFEITNLEKL), 909–930 (ENLKWASFSNNNLTKMEGLESC), 931–952 (INLEELTLDGNCISKIEGISKM), 953–975 (TKLTRLSINNNLLTGWEEHTFDN), 976–1001 (MLHLHSLSLENNRITSLSGLQKSFTL), 1023–1048 (LCNLVILDMCGNIIIWNQENYRLFVI), 1092–1115 (FKQMQELNWTSSSIRTVDLIPVDQ), 1116–1138 (FRNVCNVNLQNNHLTSFSGLIYL), 1139–1161 (PNVKVLCLNYNHIESIMPRLKPQ), 1201–1224 (MHSLEVLHLGYNGICNLIQLQLNR), 1225–1247 (LRNLKFLFLQGNEISQVEGLDNL), 1248–1270 (VVLQELVVDHNRIRSFNDSAFAK), 1272–1292 (SSLLALHLEENRLRELGKLQS), 1293–1317 (LVKLEKLFLGYNKIQDITELEKLDV), 1319–1345 (STLRELTVYGNPICRKMLHRHMLIFRL), and 1365–1388 (EFHLAELQAKKNSLIPVTHSPMDG).

The chain is Leucine-rich repeat-containing protein 9 (LRRC9) from Homo sapiens (Human).